Consider the following 968-residue polypeptide: RNA polymerase-associated protein RapA (968 aa).

The 170-residue stretch at 163–332 (EVGRRYAPRV…FARLRLLDPD (170 aa)) folds into the Helicase ATP-binding domain. Residue 176–183 (DEVGLGKT) coordinates ATP. Positions 278–281 (DEAH) match the DEAH box motif. Residues 491 to 641 (RVDWLIEFLK…AFELTCPSGH (151 aa)) enclose the Helicase C-terminal domain.

It belongs to the SNF2/RAD54 helicase family. RapA subfamily. As to quaternary structure, interacts with the RNAP. Has a higher affinity for the core RNAP than for the holoenzyme. Its ATPase activity is stimulated by binding to RNAP.

Its function is as follows. Transcription regulator that activates transcription by stimulating RNA polymerase (RNAP) recycling in case of stress conditions such as supercoiled DNA or high salt concentrations. Probably acts by releasing the RNAP, when it is trapped or immobilized on tightly supercoiled DNA. Does not activate transcription on linear DNA. Probably not involved in DNA repair. In Shewanella baltica (strain OS185), this protein is RNA polymerase-associated protein RapA.